The following is a 466-amino-acid chain: Bifunctional protein GlmU (466 aa).

A pyrophosphorylase region spans residues 1–233; the sequence is MLHKSVLGLV…ADEAMGANDR (233 aa). UDP-N-acetyl-alpha-D-glucosamine-binding positions include 11–14, Lys-25, Gln-79, and 84–85; these read LAAG and GT. Asp-108 contacts Mg(2+). Residues Gly-143, Glu-158, Asn-173, and Asn-231 each coordinate UDP-N-acetyl-alpha-D-glucosamine. Asn-231 contacts Mg(2+). Residues 234–254 form a linker region; sequence AQLAALEAVYRQRKVQELFAQ. The tract at residues 255–466 is N-acetyltransferase; the sequence is GVTLIDPNRI…QKKKEHKNDA (212 aa). Residues Arg-337 and Lys-355 each coordinate UDP-N-acetyl-alpha-D-glucosamine. His-367 functions as the Proton acceptor in the catalytic mechanism. Residues Tyr-370 and Asn-381 each coordinate UDP-N-acetyl-alpha-D-glucosamine. Residues Ala-384, 390-391, Ser-409, Ala-427, and Arg-444 each bind acetyl-CoA; that span reads NY.

This sequence in the N-terminal section; belongs to the N-acetylglucosamine-1-phosphate uridyltransferase family. It in the C-terminal section; belongs to the transferase hexapeptide repeat family. As to quaternary structure, homotrimer. Requires Mg(2+) as cofactor.

It localises to the cytoplasm. It carries out the reaction alpha-D-glucosamine 1-phosphate + acetyl-CoA = N-acetyl-alpha-D-glucosamine 1-phosphate + CoA + H(+). It catalyses the reaction N-acetyl-alpha-D-glucosamine 1-phosphate + UTP + H(+) = UDP-N-acetyl-alpha-D-glucosamine + diphosphate. Its pathway is nucleotide-sugar biosynthesis; UDP-N-acetyl-alpha-D-glucosamine biosynthesis; N-acetyl-alpha-D-glucosamine 1-phosphate from alpha-D-glucosamine 6-phosphate (route II): step 2/2. The protein operates within nucleotide-sugar biosynthesis; UDP-N-acetyl-alpha-D-glucosamine biosynthesis; UDP-N-acetyl-alpha-D-glucosamine from N-acetyl-alpha-D-glucosamine 1-phosphate: step 1/1. It functions in the pathway bacterial outer membrane biogenesis; LPS lipid A biosynthesis. Functionally, catalyzes the last two sequential reactions in the de novo biosynthetic pathway for UDP-N-acetylglucosamine (UDP-GlcNAc). The C-terminal domain catalyzes the transfer of acetyl group from acetyl coenzyme A to glucosamine-1-phosphate (GlcN-1-P) to produce N-acetylglucosamine-1-phosphate (GlcNAc-1-P), which is converted into UDP-GlcNAc by the transfer of uridine 5-monophosphate (from uridine 5-triphosphate), a reaction catalyzed by the N-terminal domain. The chain is Bifunctional protein GlmU from Dichelobacter nodosus (strain VCS1703A).